Consider the following 307-residue polypeptide: Undecaprenyl-diphosphatase 2 (307 aa).

Helical transmembrane passes span 19 to 41, 56 to 76, 117 to 137, 144 to 164, 208 to 228, 229 to 249, 251 to 271, and 285 to 305; these read GVTEFLPVSSTGHMIILGSIIGF, IHMFEIIIQLGAILAIVVLYW, FKFWTNIVVACIPAIVIGLPF, LLFFPAPVAAALMVGAVWMIF, IIGAWIVGVATVAGAEFSFFL, AIPMMLGASLLFLIKNSVVLS, VQILGLAVGFIVAFIVALVVV, and IFAVYRLAIGIIVLVLGFTKV.

Belongs to the UppP family.

The protein resides in the cell membrane. It catalyses the reaction di-trans,octa-cis-undecaprenyl diphosphate + H2O = di-trans,octa-cis-undecaprenyl phosphate + phosphate + H(+). Catalyzes the dephosphorylation of undecaprenyl diphosphate (UPP). Confers resistance to bacitracin. This chain is Undecaprenyl-diphosphatase 2, found in Clostridium acetobutylicum (strain ATCC 824 / DSM 792 / JCM 1419 / IAM 19013 / LMG 5710 / NBRC 13948 / NRRL B-527 / VKM B-1787 / 2291 / W).